We begin with the raw amino-acid sequence, 495 residues long: Vacuolar-processing enzyme (495 aa).

A signal peptide spans 1–32 (MALDRSIISKTTWYSVVLWMMVVLVRVHGAAA). N-linked (GlcNAc...) asparagine glycosylation occurs at Asn138. The active site involves His178. The active-site Nucleophile is the Cys220. A disulfide bridge links Cys253 with Cys267. N-linked (GlcNAc...) asparagine glycans are attached at residues Asn320 and Asn376. 2 disulfides stabilise this stretch: Cys431–Cys461 and Cys443–Cys478.

The protein belongs to the peptidase C13 family.

Asparagine-specific endopeptidase involved in the processing of vacuolar seed protein precursors into the mature forms. This chain is Vacuolar-processing enzyme, found in Glycine max (Soybean).